The sequence spans 447 residues: Cysteine--tRNA ligase (447 aa).

Cys-28 is a Zn(2+) binding site. The 'HIGH' region signature appears at 30–40 (PTVYNYIHIGN). Zn(2+) contacts are provided by Cys-211, His-236, and Glu-240. The 'KMSKS' region motif lies at 268 to 272 (KMSKS). Lys-271 provides a ligand contact to ATP.

Belongs to the class-I aminoacyl-tRNA synthetase family. In terms of assembly, monomer. Zn(2+) serves as cofactor.

The protein localises to the cytoplasm. The enzyme catalyses tRNA(Cys) + L-cysteine + ATP = L-cysteinyl-tRNA(Cys) + AMP + diphosphate. This Streptococcus pyogenes serotype M1 protein is Cysteine--tRNA ligase.